The chain runs to 499 residues: Membrane-associated tyrosine- and threonine-specific cdc2-inhibitory kinase (499 aa).

At Met-1 the chain carries N-acetylmethionine. The segment at Met-1–Pro-29 is disordered. Residues Gly-16–Val-28 are compositionally biased toward pro residues. At Thr-17 the chain carries Phosphothreonine. Ser-40 carries the phosphoserine modification. Residues Lys-42–Pro-72 form a disordered region. Phosphoserine is present on residues Ser-94 and Ser-120. A Protein kinase domain is found at Phe-110–Leu-359. ATP-binding positions include Leu-116 to Val-124 and Lys-139. A phosphoserine mark is found at Ser-143 and Ser-160. Asp-233 acts as the Proton acceptor in catalysis. Mg(2+) is bound by residues Asn-238, Asp-251, and Gly-253. Residues Leu-382–Ala-398 carry the Membrane-association motif motif. An interaction with PIN1 region spans residues Ala-398–Thr-499. The residue at position 426 (Ser-426) is a Phosphoserine; by PLK1. The interval Gly-437–Thr-499 is interaction with CDC2-CCNB1. The interval Gly-451 to Pro-485 is disordered. Ser-469, Ser-473, and Ser-482 each carry phosphoserine. Thr-495 carries the post-translational modification Phosphothreonine; by PLK1.

Belongs to the protein kinase superfamily. Ser/Thr protein kinase family. WEE1 subfamily. Interacts with CDC2-CCNB1 complex. Can also interact with PIN1 when phosphorylated by CDC2-CCNB1. In terms of processing, autophosphorylated. Phosphorylated by CDC2-CCNB1 complexes on undefined serine and threonine residues. The phosphorylation by CDC2-CCNB1 complexes may inhibit the catalytic activity.

The protein localises to the endoplasmic reticulum membrane. It is found in the golgi apparatus membrane. The catalysed reaction is L-seryl-[protein] + ATP = O-phospho-L-seryl-[protein] + ADP + H(+). It carries out the reaction L-threonyl-[protein] + ATP = O-phospho-L-threonyl-[protein] + ADP + H(+). With respect to regulation, negatively regulated by hyperphosphorylation during mitosis. The hyperphosphorylated form does not associate with CCNB1-CDC2 complexes. The PLK1 protein kinase may be required for mitotic phosphorylation. Its function is as follows. Acts as a negative regulator of entry into mitosis (G2 to M transition) by phosphorylation of the CDK1 kinase specifically when CDK1 is complexed to cyclins. Mediates phosphorylation of CDK1 predominantly on 'Thr-14'. Also involved in Golgi fragmentation. May be involved in phosphorylation of CDK1 on 'Tyr-15' to a lesser degree, however tyrosine kinase activity is unclear and may be indirect. The sequence is that of Membrane-associated tyrosine- and threonine-specific cdc2-inhibitory kinase (PKMYT1) from Homo sapiens (Human).